Consider the following 305-residue polypeptide: 2-aminophenol 1,6-dioxygenase beta subunit (305 aa).

The Fe cation site is built by H14, H63, and H196.

It belongs to the LigB/MhpB extradiol dioxygenase family. Heterotetramer of 2 alpha and 2 beta subunits. Requires Fe(2+) as cofactor.

It carries out the reaction 2-aminophenol + O2 = 2-aminomuconate 6-semialdehyde. Its activity is regulated as follows. Strongly inhibited by CuSO(4), FeCl(3), K(3)[Fe(CN)(6)], AgNO3, HgCl(2) and MnCl(2). Its function is as follows. Component of the 2-aminophenol 1,6-dioxygenase complex that catalyzes the ring fission of 2-aminophenol to produce 2-aminomuconic 6-semialdehyde. AmnB seems to be the catalytic subunit of the complex. The enzyme is also active toward 2-amino-p-cresol, 6-amino-m-cresol, 2-amino-m-cresol, 2-amino-4,5-dimethylphenol, 2-amino-4-chlorophenol, and catechol. This Pseudomonas sp protein is 2-aminophenol 1,6-dioxygenase beta subunit (amnB).